Here is a 161-residue protein sequence, read N- to C-terminus: Phosphopantetheine adenylyltransferase (161 aa).

Serine 11 serves as a coordination point for substrate. Residues 11–12 (SF) and histidine 19 each bind ATP. Residues lysine 43, leucine 75, and arginine 89 each contribute to the substrate site. ATP-binding positions include 90 to 92 (GLR), glutamate 100, and 125 to 131 (YSYLSSS).

It belongs to the bacterial CoaD family. As to quaternary structure, homohexamer. Mg(2+) serves as cofactor.

It localises to the cytoplasm. It catalyses the reaction (R)-4'-phosphopantetheine + ATP + H(+) = 3'-dephospho-CoA + diphosphate. It functions in the pathway cofactor biosynthesis; coenzyme A biosynthesis; CoA from (R)-pantothenate: step 4/5. In terms of biological role, reversibly transfers an adenylyl group from ATP to 4'-phosphopantetheine, yielding dephospho-CoA (dPCoA) and pyrophosphate. The protein is Phosphopantetheine adenylyltransferase of Geotalea daltonii (strain DSM 22248 / JCM 15807 / FRC-32) (Geobacter daltonii).